The sequence spans 676 residues: Lutropin-choriogonadotropic hormone receptor (676 aa).

A signal peptide spans 1 to 29 (MKQPLLALQLLKLLLLLLLPLPPLPRALR). Residues 30–340 (EARCCPEPCN…EDIMGYDFLR (311 aa)) are Extracellular-facing. Asparagine 103 carries an N-linked (GlcNAc...) asparagine glycan. LRR repeat units follow at residues 126–151 (LPRL…IFSS), 153–175 (TNFI…AFQG), 176–200 (MNNE…AFNG), 201–224 (TTVI…AFRG), and 225–248 (ATGP…GLES). N-linked (GlcNAc...) asparagine glycosylation is found at asparagine 178 and asparagine 199. Tyrosine 308 is subject to Sulfotyrosine. The chain crosses the membrane as a helical span at residues 341–362 (VLIWLINILAIMGNMTVLFVLL). Residues 363–372 (TSRYKLTVPR) lie on the Cytoplasmic side of the membrane. The chain crosses the membrane as a helical span at residues 373–393 (FLMCNLSFADFCMGLYLLLIA). Over 394–416 (SVDSQTKGQYYNHAIDWQTGSGC) the chain is Extracellular. Cysteines 416 and 491 form a disulfide. Residues 417–439 (NTAGFFTVFASELSVYTLTVITL) form a helical membrane-spanning segment. Topologically, residues 440 to 459 (ERWHTITYAIHLDQKLRLRH) are cytoplasmic. Residues 460–482 (AILIMLGGWLFSSLIAMLPLVGV) form a helical membrane-spanning segment. The Extracellular segment spans residues 483–502 (SNYMKVSICFPMDVETTLSQ). A helical transmembrane segment spans residues 503–526 (IYILTILILNVVAFIIICACYIKI). At 527–547 (YFAVRNPELMATNKDTKIAKK) the chain is on the cytoplasmic side. A helical membrane pass occupies residues 548-571 (MAILIFTDFTCMAPISFFAISAAF). The Extracellular segment spans residues 572 to 582 (KMPLITVTNSK). The chain crosses the membrane as a helical span at residues 583 to 604 (VLLVLFYPINSCANPFLYAIFT). At 605–676 (KTFRRDFFLL…LLDKTCYKEY (72 aa)) the chain is on the cytoplasmic side. Residues cysteine 620 and cysteine 621 are each lipidated (S-palmitoyl cysteine).

Belongs to the G-protein coupled receptor 1 family. FSH/LSH/TSH subfamily. In terms of processing, sulfated.

Its subcellular location is the cell membrane. Its function is as follows. Receptor for lutropin-choriogonadotropic hormone. The activity of this receptor is mediated by G proteins which activate adenylate cyclase. The polypeptide is Lutropin-choriogonadotropic hormone receptor (LHCGR) (Callithrix jacchus (White-tufted-ear marmoset)).